Consider the following 1342-residue polypeptide: DNA-directed RNA polymerase subunit beta (1342 aa).

Belongs to the RNA polymerase beta chain family. The RNAP catalytic core consists of 2 alpha, 1 beta, 1 beta' and 1 omega subunit. When a sigma factor is associated with the core the holoenzyme is formed, which can initiate transcription.

The enzyme catalyses RNA(n) + a ribonucleoside 5'-triphosphate = RNA(n+1) + diphosphate. DNA-dependent RNA polymerase catalyzes the transcription of DNA into RNA using the four ribonucleoside triphosphates as substrates. The polypeptide is DNA-directed RNA polymerase subunit beta (Salmonella choleraesuis (strain SC-B67)).